Reading from the N-terminus, the 331-residue chain is Tetraacyldisaccharide 4'-kinase (331 aa).

59 to 66 (FVGGTGKT) contacts ATP.

Belongs to the LpxK family.

The catalysed reaction is a lipid A disaccharide + ATP = a lipid IVA + ADP + H(+). The protein operates within glycolipid biosynthesis; lipid IV(A) biosynthesis; lipid IV(A) from (3R)-3-hydroxytetradecanoyl-[acyl-carrier-protein] and UDP-N-acetyl-alpha-D-glucosamine: step 6/6. In terms of biological role, transfers the gamma-phosphate of ATP to the 4'-position of a tetraacyldisaccharide 1-phosphate intermediate (termed DS-1-P) to form tetraacyldisaccharide 1,4'-bis-phosphate (lipid IVA). This is Tetraacyldisaccharide 4'-kinase from Alkalilimnicola ehrlichii (strain ATCC BAA-1101 / DSM 17681 / MLHE-1).